We begin with the raw amino-acid sequence, 313 residues long: Porphobilinogen deaminase (313 aa).

The residue at position 242 (Cys242) is an S-(dipyrrolylmethanemethyl)cysteine.

This sequence belongs to the HMBS family. As to quaternary structure, monomer. Dipyrromethane is required as a cofactor.

It carries out the reaction 4 porphobilinogen + H2O = hydroxymethylbilane + 4 NH4(+). Its pathway is porphyrin-containing compound metabolism; protoporphyrin-IX biosynthesis; coproporphyrinogen-III from 5-aminolevulinate: step 2/4. Its function is as follows. Tetrapolymerization of the monopyrrole PBG into the hydroxymethylbilane pre-uroporphyrinogen in several discrete steps. This Salmonella arizonae (strain ATCC BAA-731 / CDC346-86 / RSK2980) protein is Porphobilinogen deaminase.